The chain runs to 306 residues: Ribosomal protein L11 methyltransferase (306 aa).

Residues Thr-154, Gly-179, Asp-201, and Asn-242 each contribute to the S-adenosyl-L-methionine site.

It belongs to the methyltransferase superfamily. PrmA family.

Its subcellular location is the cytoplasm. The catalysed reaction is L-lysyl-[protein] + 3 S-adenosyl-L-methionine = N(6),N(6),N(6)-trimethyl-L-lysyl-[protein] + 3 S-adenosyl-L-homocysteine + 3 H(+). Its function is as follows. Methylates ribosomal protein L11. This chain is Ribosomal protein L11 methyltransferase, found in Xanthomonas euvesicatoria pv. vesicatoria (strain 85-10) (Xanthomonas campestris pv. vesicatoria).